The following is a 427-amino-acid chain: ATP-sensitive inward rectifier potassium channel 12 (427 aa).

Residues 1-77 lie on the Cytoplasmic side of the membrane; the sequence is MTAASRANPY…LADMFTTCVD (77 aa). Position 75 is an S-nitrosocysteine (Cys-75). Residues 78-104 form a helical membrane-spanning segment; that stretch reads IRWRYMLLIFSLAFLASWLLFGIIFWV. 2 residues coordinate a 1,2-diacyl-sn-glycero-3-phospho-(1D-myo-inositol-4,5-bisphosphate): Arg-79 and Arg-81. Residues 105–129 lie on the Extracellular side of the membrane; it reads IAVAHGDLEPAEGRGRTPCVLQVHG. Cysteines 123 and 155 form a disulfide. An intramembrane region (helical; Pore-forming) is located at residues 130–146; sequence FMAAFLFSIETQTTIGY. K(+) is bound by residues Thr-143, Ile-144, Gly-145, and Tyr-146. A Selectivity filter motif is present at residues 143 to 148; sequence TIGYGL. The Extracellular segment spans residues 147–155; sequence GLRCVTEEC. Residues 156–183 traverse the membrane as a helical segment; it reads PVAVFMVVAQSIVGCIIDSFMIGAIMAK. A 1,2-diacyl-sn-glycero-3-phospho-(1D-myo-inositol-4,5-bisphosphate)-binding residues include Lys-183 and Lys-188. Residues 184–427 lie on the Cytoplasmic side of the membrane; it reads MGRPKKRAQT…ERPYRRESEI (244 aa). The interval 387-427 is disordered; the sequence is DEEDEVATDRDGRSPQPEHDFDRLQASSGALERPYRRESEI. Residues 393-409 show a composition bias toward basic and acidic residues; sequence ATDRDGRSPQPEHDFDR. Positions 425-427 match the PDZ-binding motif; the sequence is SEI.

The protein belongs to the inward rectifier-type potassium channel (TC 1.A.2.1) family. KCNJ12 subfamily. Homotetramer. Forms heteromer with KCNJ4. Can form heteromeric channels with Kir2.6/KCNJ18. Association, via its PDZ-recognition domain, with LIN7A, LIN7B, LIN7C, DLG1, CASK and APBA1 plays a key role in its localization and trafficking. Highest level in cerebellum. Moderately found in kidney, forebrain and skeletal muscle. Not detected in uterus, liver and pancreas.

It localises to the membrane. Its subcellular location is the cell membrane. The protein localises to the sarcolemma. The protein resides in the T-tubule. It carries out the reaction K(+)(in) = K(+)(out). With respect to regulation, activated by phosphatidylinositol 4,5-biphosphate (PtdIns(4,5)P2). PtdIns(4,5)P2 binding to the cytoplasmic side of the channel triggers a conformation change leading to channel opening. Inhibited by Ba(2+). In terms of biological role, inward rectifying potassium channel that probably participates in controlling the resting membrane potential in electrically excitable cells. It probably participates in establishing action potential waveform and excitability of neuronal and muscle tissues. Inward rectifier potassium channels are characterized by a greater tendency to allow potassium to flow into the cell rather than out of it. Their voltage dependence is regulated by the concentration of extracellular potassium; as external potassium is raised, the voltage range of the channel opening shifts to more positive voltages. The inward rectification is mainly due to the blockage of outward current by internal magnesium. This chain is ATP-sensitive inward rectifier potassium channel 12 (Kcnj12), found in Rattus norvegicus (Rat).